A 467-amino-acid chain; its full sequence is MKQFMDEDFLLSNDVARTLYYDYAKDQPIFDYHCHLPPKEIAENRQFKDLTEIWLAGDHYKWRAMRSAGVDENLITGNASNYEKYQAWAKTVPLCIGNPIYHWTHLELRRPFGITNTLFNPQSADKIWQECNELLQQPEFSARGIMRQMNVKFSGTTDDPIDSLEYHKAIAEDRDFDIEVAPSWRPDKAVKIELPQFNDYIKQLEQVSDTEINGFDSLKKALSKRLDHFDKRGCKSADQGMEIVRFAPVPDEKELDRILQLRRNEQPLTELQISQFSTALLVWLGAEYCKRNWVMQMHIGALRNNNTRMFKLLGADSGFDSIADRTFAEQLSRLLDAMDQNNQLPKTILYCLNPRDNEMIATMIGNFQTGGIAGKIQFGSGWWFNDQKDGMERQLQQLSQLGLLSQFVGMLTDSRSFLSYTRHEYFRRILCEMIGRWVVNGEAPNDMNLLGNMVKNICFDNAKAYFK.

Belongs to the metallo-dependent hydrolases superfamily. Uronate isomerase family.

The catalysed reaction is D-glucuronate = D-fructuronate. It catalyses the reaction aldehydo-D-galacturonate = keto-D-tagaturonate. It functions in the pathway carbohydrate metabolism; pentose and glucuronate interconversion. This Mannheimia succiniciproducens (strain KCTC 0769BP / MBEL55E) protein is Uronate isomerase.